The primary structure comprises 162 residues: UPF0114 protein Sden_0436 (162 aa).

3 consecutive transmembrane segments (helical) span residues 15–35, 53–73, and 136–156; these read IMAP…IKFF, LVLI…LIMV, and IMWY…MGYL.

Belongs to the UPF0114 family.

It is found in the cell membrane. The sequence is that of UPF0114 protein Sden_0436 from Shewanella denitrificans (strain OS217 / ATCC BAA-1090 / DSM 15013).